Here is a 392-residue protein sequence, read N- to C-terminus: MPLSLLQELIKRPSITPQECGIYEIILNKLNSLIQKEHIDTFIIEQEKEGVKNLFYLIAPKGADKSNLHHFCFAGHIDVVPTGEGWEFEPFCGTQDEKYIYGRGTQDMKGGISAFICAVCNILESHNTSSLPIMLSILLTSDEEGEGIYGTKFMLEELKKRDLLPHSCIVAEPTSINHTGDMLKIGRRGSINGTLIIEGKQGHVAYPQKCINPIELLGSKLGALAGIELDNGDSHFAPSKLVITDIRSGMEVVNVTPQNLKIMFNVRNSPLSNEDSIRSYITSILGSLPYELTLKTNSLPFITADDSEIVKSLCAIIERTLGITPQLSTSGGTSDARFFASYGVNVVEIGVPNDRIHAINERVSISDILALHDIFVEFLQLFIKNAKIENLK.

Residue His76 coordinates Zn(2+). Asp78 is a catalytic residue. Asp107 contributes to the Zn(2+) binding site. Residue Glu143 is the Proton acceptor of the active site. Zn(2+) is bound by residues Glu144, Glu172, and His357.

The protein belongs to the peptidase M20A family. DapE subfamily. Homodimer. Requires Zn(2+) as cofactor. Co(2+) is required as a cofactor.

It catalyses the reaction N-succinyl-(2S,6S)-2,6-diaminopimelate + H2O = (2S,6S)-2,6-diaminopimelate + succinate. It functions in the pathway amino-acid biosynthesis; L-lysine biosynthesis via DAP pathway; LL-2,6-diaminopimelate from (S)-tetrahydrodipicolinate (succinylase route): step 3/3. Catalyzes the hydrolysis of N-succinyl-L,L-diaminopimelic acid (SDAP), forming succinate and LL-2,6-diaminopimelate (DAP), an intermediate involved in the bacterial biosynthesis of lysine and meso-diaminopimelic acid, an essential component of bacterial cell walls. This is Succinyl-diaminopimelate desuccinylase from Helicobacter hepaticus (strain ATCC 51449 / 3B1).